Consider the following 355-residue polypeptide: 4-hydroxy-3-methylbut-2-en-1-yl diphosphate synthase (flavodoxin) (355 aa).

[4Fe-4S] cluster-binding residues include Cys266, Cys269, Cys301, and Glu308.

The protein belongs to the IspG family. Requires [4Fe-4S] cluster as cofactor.

The enzyme catalyses (2E)-4-hydroxy-3-methylbut-2-enyl diphosphate + oxidized [flavodoxin] + H2O + 2 H(+) = 2-C-methyl-D-erythritol 2,4-cyclic diphosphate + reduced [flavodoxin]. It participates in isoprenoid biosynthesis; isopentenyl diphosphate biosynthesis via DXP pathway; isopentenyl diphosphate from 1-deoxy-D-xylulose 5-phosphate: step 5/6. Converts 2C-methyl-D-erythritol 2,4-cyclodiphosphate (ME-2,4cPP) into 1-hydroxy-2-methyl-2-(E)-butenyl 4-diphosphate. This Caldanaerobacter subterraneus subsp. tengcongensis (strain DSM 15242 / JCM 11007 / NBRC 100824 / MB4) (Thermoanaerobacter tengcongensis) protein is 4-hydroxy-3-methylbut-2-en-1-yl diphosphate synthase (flavodoxin).